A 497-amino-acid polypeptide reads, in one-letter code: Reticulophagy regulator 1 (497 aa).

The interval 1–51 is disordered; the sequence is MASPAPPEHAEEGCPAPAAEEQAPPSPPPPQASPAERQQQEEEAQEAGAAE. At 1–59 the chain is on the cytoplasmic side; it reads MASPAPPEHAEEGCPAPAAEEQAPPSPPPPQASPAERQQQEEEAQEAGAAEGAGLQVEE. A compositionally biased stretch (low complexity) spans 13-23; it reads GCPAPAAEEQA. A helical transmembrane segment spans residues 60-80; sequence AAGRAAAAVTWLLGEPVLWLG. Topologically, residues 81–95 are lumenal; the sequence is CRADELLSWKRPLRS. The tract at residues 84–233 is reticulon homology domain; it reads DELLSWKRPL…LLCAFLCPLF (150 aa). Residues 96–116 traverse the membrane as a helical segment; the sequence is LLGFVAANLLFWFLALTPWRV. Residues 117-118 are Cytoplasmic-facing; the sequence is YH. Residues 119-139 traverse the membrane as a helical segment; the sequence is LISVMILGRVIMQIIKDMVLS. At 140 to 208 the chain is on the lumenal side; the sequence is RTRGAQLWRS…LVCSVCTFFT (69 aa). A Phosphoserine modification is found at S149. S151 is subject to Phosphoserine; by CAMK2B. S153 carries the post-translational modification Phosphoserine. A helical membrane pass occupies residues 209 to 229; the sequence is ILGSYIPGVILSYLLLLCAFL. Topologically, residues 230-497 are cytoplasmic; that stretch reads CPLFKCNDIG…GFLSNLLGGH (268 aa). The span at 319-330 shows a compositional bias: polar residues; sequence FNLSEGYTPQTD. 4 disordered regions span residues 319–365, 377–396, 436–455, and 468–497; these read FNLS…EDEL, KEQL…AAGL, LSQA…GDDF, and SELG…LGGH. Basic and acidic residues-rich tracts occupy residues 334-348 and 377-388; these read DLDR…RDLS and KEQLDSGHRPSK. The segment covering 443–455 has biased composition (acidic residues); the sequence is PEEDTDTEEGDDF. An LIR motif motif is present at residues 453 to 458; sequence DDFELL. Over residues 471-490 the composition is skewed to polar residues; sequence GLTQDQEAEAQQNKKSSGFL.

It belongs to the RETREG family. Homooligomer; oligomerization is enhanced following endoplasmic reticulum stress and is mediated by the reticulon homology domain. Interacts with ATG8 family modifier proteins MAP1LC3A, MAP1LC3B, MAP1LC3C, GABARAP, GABARAPL1 and GABARAPL2. Shows higher affinity for GABARAPL1 than for MAP1LC3A or MAP1LC3B. Phosphorylation at Ser-151 by CAMK2B enhances oligomerization and membrane scission and reticulophagy activity. As to expression, overexpressed in esophageal squamous cell carcinoma.

Its subcellular location is the golgi apparatus. It localises to the cis-Golgi network membrane. The protein resides in the endoplasmic reticulum membrane. Endoplasmic reticulum (ER)-anchored autophagy regulator which mediates ER delivery into lysosomes through sequestration into autophagosomes. Promotes membrane remodeling and ER scission via its membrane bending capacity and targets the fragments into autophagosomes via interaction with ATG8 family proteins. Active under basal conditions. Required for collagen quality control in a LIR motif-dependent manner. Required for long-term survival of nociceptive and autonomic ganglion neurons. In terms of biological role, (Microbial infection) During SARS-CoV-2 infection, RETREG1-mediated reticulophagy is promoted by SARS-CoV-2 ORF3A protein. This induces endoplasmic reticulum stress and inflammatory responses and facilitates viral infection. The polypeptide is Reticulophagy regulator 1 (Homo sapiens (Human)).